The sequence spans 564 residues: Histone acetyltransferase rtt109 (564 aa).

Residues Phe-138, 157–159 (HVL), and Trp-167 each bind acetyl-CoA. The active-site Proton donor/acceptor is Asp-261. At Lys-263 the chain carries N6-acetyllysine; by autocatalysis. Disordered stretches follow at residues 355 to 420 (YDKV…NAFY) and 506 to 549 (RKKD…ESPG). A compositionally biased stretch (low complexity) spans 366–377 (AVSVSTDSQSSD). 2 stretches are compositionally biased toward polar residues: residues 394–417 (DPST…TDQN) and 512–521 (SQATTATSAQ). Residues 529–544 (GTVSTAVTAEASTTGT) show a composition bias toward low complexity.

Belongs to the RTT109 family.

The protein resides in the nucleus. It localises to the vacuole. The catalysed reaction is L-lysyl-[protein] + acetyl-CoA = N(6)-acetyl-L-lysyl-[protein] + CoA + H(+). It carries out the reaction L-lysyl-[histone] + acetyl-CoA = N(6)-acetyl-L-lysyl-[histone] + CoA + H(+). In terms of biological role, histone chaperone-dependent acetylase that modifies 'Lys-56' of histone H3 (H3K56ac). Histone H3 'Lys-56' acetylation may be required for S-phase-linked DNA damage tolerance. Also acetylates 'Lys-9' of histone H3 (H3K9ac). Autoacetylates. The polypeptide is Histone acetyltransferase rtt109 (Aspergillus flavus).